Here is a 393-residue protein sequence, read N- to C-terminus: NAD(P)H-quinone oxidoreductase subunit H, chloroplastic (393 aa).

Belongs to the complex I 49 kDa subunit family. NDH is composed of at least 16 different subunits, 5 of which are encoded in the nucleus.

Its subcellular location is the plastid. The protein localises to the chloroplast thylakoid membrane. The enzyme catalyses a plastoquinone + NADH + (n+1) H(+)(in) = a plastoquinol + NAD(+) + n H(+)(out). It carries out the reaction a plastoquinone + NADPH + (n+1) H(+)(in) = a plastoquinol + NADP(+) + n H(+)(out). In terms of biological role, NDH shuttles electrons from NAD(P)H:plastoquinone, via FMN and iron-sulfur (Fe-S) centers, to quinones in the photosynthetic chain and possibly in a chloroplast respiratory chain. The immediate electron acceptor for the enzyme in this species is believed to be plastoquinone. Couples the redox reaction to proton translocation, and thus conserves the redox energy in a proton gradient. The sequence is that of NAD(P)H-quinone oxidoreductase subunit H, chloroplastic from Ipomoea purpurea (Common morning glory).